Reading from the N-terminus, the 474-residue chain is Bifunctional protein HldE (474 aa).

Residues 1 to 318 (MKLSMPRFDQ…RAVQREQGSE (318 aa)) are ribokinase. 194–197 (NLSE) serves as a coordination point for ATP. The active site involves Asp263. The segment at 343–474 (FTNGCFDILH…AIVEKIRQKG (132 aa)) is cytidylyltransferase.

It in the N-terminal section; belongs to the carbohydrate kinase PfkB family. The protein in the C-terminal section; belongs to the cytidylyltransferase family. In terms of assembly, homodimer.

It catalyses the reaction D-glycero-beta-D-manno-heptose 7-phosphate + ATP = D-glycero-beta-D-manno-heptose 1,7-bisphosphate + ADP + H(+). It carries out the reaction D-glycero-beta-D-manno-heptose 1-phosphate + ATP + H(+) = ADP-D-glycero-beta-D-manno-heptose + diphosphate. It functions in the pathway nucleotide-sugar biosynthesis; ADP-L-glycero-beta-D-manno-heptose biosynthesis; ADP-L-glycero-beta-D-manno-heptose from D-glycero-beta-D-manno-heptose 7-phosphate: step 1/4. Its pathway is nucleotide-sugar biosynthesis; ADP-L-glycero-beta-D-manno-heptose biosynthesis; ADP-L-glycero-beta-D-manno-heptose from D-glycero-beta-D-manno-heptose 7-phosphate: step 3/4. It participates in bacterial outer membrane biogenesis; LPS core biosynthesis. Its function is as follows. Catalyzes the phosphorylation of D-glycero-D-manno-heptose 7-phosphate at the C-1 position to selectively form D-glycero-beta-D-manno-heptose-1,7-bisphosphate. Catalyzes the ADP transfer from ATP to D-glycero-beta-D-manno-heptose 1-phosphate, yielding ADP-D-glycero-beta-D-manno-heptose. This is Bifunctional protein HldE from Pseudomonas aeruginosa (strain ATCC 15692 / DSM 22644 / CIP 104116 / JCM 14847 / LMG 12228 / 1C / PRS 101 / PAO1).